The chain runs to 239 residues: ATP synthase subunit a (239 aa).

5 consecutive transmembrane segments (helical) span residues 17–37 (GTVC…VYFF), 75–95 (FHLL…IGLI), 113–133 (DPFV…LFGV), 182–202 (LLTL…PLAI), and 206–226 (MVWI…FVTL).

It belongs to the ATPase A chain family. As to quaternary structure, F-type ATPases have 2 components, CF(1) - the catalytic core - and CF(0) - the membrane proton channel. CF(1) has five subunits: alpha(3), beta(3), gamma(1), delta(1), epsilon(1). CF(0) has three main subunits: a(1), b(2) and c(9-12). The alpha and beta chains form an alternating ring which encloses part of the gamma chain. CF(1) is attached to CF(0) by a central stalk formed by the gamma and epsilon chains, while a peripheral stalk is formed by the delta and b chains.

It is found in the cell membrane. Functionally, key component of the proton channel; it plays a direct role in the translocation of protons across the membrane. The chain is ATP synthase subunit a from Enterococcus hirae (strain ATCC 9790 / DSM 20160 / JCM 8729 / LMG 6399 / NBRC 3181 / NCIMB 6459 / NCDO 1258 / NCTC 12367 / WDCM 00089 / R).